Reading from the N-terminus, the 264-residue chain is GTP cyclohydrolase FolE2 (264 aa).

Belongs to the GTP cyclohydrolase IV family.

The enzyme catalyses GTP + H2O = 7,8-dihydroneopterin 3'-triphosphate + formate + H(+). The protein operates within cofactor biosynthesis; 7,8-dihydroneopterin triphosphate biosynthesis; 7,8-dihydroneopterin triphosphate from GTP: step 1/1. In terms of biological role, converts GTP to 7,8-dihydroneopterin triphosphate. The sequence is that of GTP cyclohydrolase FolE2 from Vesicomyosocius okutanii subsp. Calyptogena okutanii (strain HA).